Consider the following 379-residue polypeptide: Cyclin-dependent kinase-like 4 (379 aa).

Residues 4–286 (YEKLAKTGEG…CSQLLESSYF (283 aa)) form the Protein kinase domain. Residues 10–18 (TGEGSYGVV) and Lys33 contribute to the ATP site. Residues 45-51 (KKIALRE) carry the [NKR]KIAxRE motif. Asp126 (proton acceptor) is an active-site residue.

This sequence belongs to the protein kinase superfamily. CMGC Ser/Thr protein kinase family. CDC2/CDKX subfamily.

Its subcellular location is the cytoplasm. It catalyses the reaction L-seryl-[protein] + ATP = O-phospho-L-seryl-[protein] + ADP + H(+). The catalysed reaction is L-threonyl-[protein] + ATP = O-phospho-L-threonyl-[protein] + ADP + H(+). In Homo sapiens (Human), this protein is Cyclin-dependent kinase-like 4 (CDKL4).